Consider the following 317-residue polypeptide: Beta-sarcoglycan (317 aa).

The tract at residues 1–31 (MAAAAAATEQQSSNGPVKKSMREKAVERRNV) is disordered. Residues 1–64 (MAAAAAATEQ…GLRGRKGNLA (64 aa)) lie on the Cytoplasmic side of the membrane. A compositionally biased stretch (basic and acidic residues) spans 20-31 (SMREKAVERRNV). The chain crosses the membrane as a helical; Signal-anchor for type II membrane protein span at residues 65–85 (ICVIVLLFILAVINLIITLVI). Over 86-317 (WAVIRIGPNG…TSDNPCGDLY (232 aa)) the chain is Extracellular. N-linked (GlcNAc...) asparagine glycans are attached at residues Asn157, Asn210, and Asn257. 2 cysteine pairs are disulfide-bonded: Cys287/Cys313 and Cys289/Cys306.

Belongs to the sarcoglycan beta/delta/gamma/zeta family. In terms of assembly, cross-link to form 2 major subcomplexes: one consisting of SGCB, SGCD and SGCG and the other consisting of SGCB and SGCD. The association between SGCB and SGCG is particularly strong while SGCA is loosely associated with the other sarcoglycans. Post-translationally, disulfide bonds are present.

It localises to the cell membrane. Its subcellular location is the sarcolemma. The protein resides in the cytoplasm. The protein localises to the cytoskeleton. Functionally, component of the sarcoglycan complex, a subcomplex of the dystrophin-glycoprotein complex which forms a link between the F-actin cytoskeleton and the extracellular matrix. This is Beta-sarcoglycan (SGCB) from Bos taurus (Bovine).